The sequence spans 282 residues: tRNA uridine(34) hydroxylase (282 aa).

In terms of domain architecture, Rhodanese spans 128–222 (EGRPVVMLDT…YFEEVGGSHY (95 aa)). Cys182 acts as the Cysteine persulfide intermediate in catalysis.

This sequence belongs to the TrhO family.

The catalysed reaction is uridine(34) in tRNA + AH2 + O2 = 5-hydroxyuridine(34) in tRNA + A + H2O. Its function is as follows. Catalyzes oxygen-dependent 5-hydroxyuridine (ho5U) modification at position 34 in tRNAs. The sequence is that of tRNA uridine(34) hydroxylase from Cupriavidus necator (strain ATCC 17699 / DSM 428 / KCTC 22496 / NCIMB 10442 / H16 / Stanier 337) (Ralstonia eutropha).